The chain runs to 110 residues: uncharacterized protein (110 aa).

This is an uncharacterized protein from Schizosaccharomyces pombe (strain 972 / ATCC 24843) (Fission yeast).